Here is a 185-residue protein sequence, read N- to C-terminus: Ribosome-recycling factor (185 aa).

The protein belongs to the RRF family.

It localises to the cytoplasm. Functionally, responsible for the release of ribosomes from messenger RNA at the termination of protein biosynthesis. May increase the efficiency of translation by recycling ribosomes from one round of translation to another. The polypeptide is Ribosome-recycling factor (Listeria monocytogenes serovar 1/2a (strain ATCC BAA-679 / EGD-e)).